Consider the following 287-residue polypeptide: Bifunctional protein FolD 2 (287 aa).

NADP(+) contacts are provided by residues 166 to 168 (GAS) and I232.

This sequence belongs to the tetrahydrofolate dehydrogenase/cyclohydrolase family. As to quaternary structure, homodimer.

The catalysed reaction is (6R)-5,10-methylene-5,6,7,8-tetrahydrofolate + NADP(+) = (6R)-5,10-methenyltetrahydrofolate + NADPH. It carries out the reaction (6R)-5,10-methenyltetrahydrofolate + H2O = (6R)-10-formyltetrahydrofolate + H(+). It functions in the pathway one-carbon metabolism; tetrahydrofolate interconversion. Catalyzes the oxidation of 5,10-methylenetetrahydrofolate to 5,10-methenyltetrahydrofolate and then the hydrolysis of 5,10-methenyltetrahydrofolate to 10-formyltetrahydrofolate. The protein is Bifunctional protein FolD 2 of Hydrogenovibrio crunogenus (strain DSM 25203 / XCL-2) (Thiomicrospira crunogena).